We begin with the raw amino-acid sequence, 416 residues long: Gap junction alpha-3 protein (416 aa).

An intramembrane segment occupies 2 to 15; the sequence is GDWSFLGRLLENAQ. Residues 16 to 19 lie on the Cytoplasmic side of the membrane; that stretch reads EHST. A helical membrane pass occupies residues 20 to 40; sequence VIGKVWLTVLFIFRILVLGAA. Residues 41–71 lie on the Extracellular side of the membrane; the sequence is AEEVWGDEQSDFTCNTQQPGCENVCYDRAFP. 3 disulfide bridges follow: C54–C198, C61–C192, and C65–C187. The chain crosses the membrane as a helical span at residues 72-92; that stretch reads ISHIRFWALQIIFVSTPTLIY. Over 93-158 the chain is Cytoplasmic; that stretch reads LGHVLHIVRM…GALLRTYVFN (66 aa). Residues 110-128 are compositionally biased toward basic and acidic residues; the sequence is EEELLRRDNPQHGRGREPM. A disordered region spans residues 110-141; sequence EEELLRRDNPQHGRGREPMRTGSPRDPPLRDD. A helical transmembrane segment spans residues 159-179; sequence IIFKTLFEVGFIAGQYFLYGF. The Extracellular segment spans residues 180 to 207; it reads QLQPLYRCDRWPCPNTVDCFISRPTEKT. Residues 208 to 228 form a helical membrane-spanning segment; that stretch reads IFVIFMLAVACASLVLNMLEI. Residues 229 to 416 are Cytoplasmic-facing; that stretch reads YHLGWKKLKQ…GRARPGDLAI (188 aa). Residues 336–416 are disordered; the sequence is GAEPQTPASK…GRARPGDLAI (81 aa). The segment covering 342 to 353 has biased composition (low complexity); it reads PASKPSSAASSP.

It belongs to the connexin family. Alpha-type (group II) subfamily. In terms of assembly, a hemichannel or connexon is composed of a hexamer of connexins. A functional gap junction is formed by the apposition of two hemichannels. Forms heteromeric channels with GJA8. As to expression, detected in eye lens (at protein level). Most abundant in lens, but also present in heart and kidney.

The protein resides in the cell membrane. It is found in the cell junction. The protein localises to the gap junction. Functionally, structural component of lens fiber gap junctions. Gap junctions are dodecameric channels that connect the cytoplasm of adjoining cells. They are formed by the docking of two hexameric hemichannels, one from each cell membrane. Small molecules and ions diffuse from one cell to a neighboring cell via the central pore. This is Gap junction alpha-3 protein (Gja3) from Rattus norvegicus (Rat).